The primary structure comprises 213 residues: Large ribosomal subunit protein uL1 (213 aa).

This sequence belongs to the universal ribosomal protein uL1 family. In terms of assembly, part of the 50S ribosomal subunit.

Binds directly to 23S rRNA. Probably involved in E site tRNA release. Functionally, protein L1 is also a translational repressor protein, it controls the translation of its operon by binding to its mRNA. This is Large ribosomal subunit protein uL1 from Methanococcus voltae.